The chain runs to 474 residues: tRNA-2-methylthio-N(6)-dimethylallyladenosine synthase (474 aa).

An MTTase N-terminal domain is found at 3-120; it reads KKLHIKTWGC…LPEMINSVRG (118 aa). Residues Cys12, Cys49, Cys83, Cys157, Cys161, and Cys164 each coordinate [4Fe-4S] cluster. Residues 143 to 375 form the Radical SAM core domain; it reads RAEGPTAFVS…QERINQQAMA (233 aa). A TRAM domain is found at 378-441; the sequence is RRMLGTTQRI…PNSLRGKVVR (64 aa).

This sequence belongs to the methylthiotransferase family. MiaB subfamily. As to quaternary structure, monomer. [4Fe-4S] cluster is required as a cofactor.

It is found in the cytoplasm. The enzyme catalyses N(6)-dimethylallyladenosine(37) in tRNA + (sulfur carrier)-SH + AH2 + 2 S-adenosyl-L-methionine = 2-methylsulfanyl-N(6)-dimethylallyladenosine(37) in tRNA + (sulfur carrier)-H + 5'-deoxyadenosine + L-methionine + A + S-adenosyl-L-homocysteine + 2 H(+). Its function is as follows. Catalyzes the methylthiolation of N6-(dimethylallyl)adenosine (i(6)A), leading to the formation of 2-methylthio-N6-(dimethylallyl)adenosine (ms(2)i(6)A) at position 37 in tRNAs that read codons beginning with uridine. The protein is tRNA-2-methylthio-N(6)-dimethylallyladenosine synthase of Shigella boydii serotype 18 (strain CDC 3083-94 / BS512).